The chain runs to 473 residues: Probable aspartokinase (473 aa).

ACT domains lie at 323–392 and 409–473; these read IFGA…FLNN and VVGA…KTNS.

The protein belongs to the aspartokinase family.

The catalysed reaction is L-aspartate + ATP = 4-phospho-L-aspartate + ADP. It functions in the pathway amino-acid biosynthesis; L-lysine biosynthesis via DAP pathway; (S)-tetrahydrodipicolinate from L-aspartate: step 1/4. Its pathway is amino-acid biosynthesis; L-methionine biosynthesis via de novo pathway; L-homoserine from L-aspartate: step 1/3. It participates in amino-acid biosynthesis; L-threonine biosynthesis; L-threonine from L-aspartate: step 1/5. In Methanocaldococcus jannaschii (strain ATCC 43067 / DSM 2661 / JAL-1 / JCM 10045 / NBRC 100440) (Methanococcus jannaschii), this protein is Probable aspartokinase.